The sequence spans 700 residues: MANKREFPLDRTRNIGIMAHIDAGKTTTTERILYYTGKIHKIGETHEGASQMDWMPQEQERGITITSAATTAFWKDHRVNIIDTPGHVDFTIEVERSLRVLDGAITVLDAQSGVEPQTENVWRQATTYGVPRLVFVNKMDKIGADFDYSMTTLHDRLQANAHAVQMPIGAEDKFEGVIDLIEMKADLYDEDELGTKWDTVDVPDDYKEAAQKAHNDLIEAVADVDDGIMDKYLEGEEISNAELKAAIRKATINLEFYPVLAGSAFKNKGVQMLLDAVIDYLPSPLDVRPYHATDPDTGDAVELTAGDDKPFAALAFKVATDPFVGRLTYIRVYSGTLEAGSYVLNATKDNRERVGRLLQMHSNHREEIPEVFSGDIAAAIGLKNTTTGDSLTDVDHPLILESLDVPDPVIQVSIEPDSKEDQDKLDVGLQKLSEEDPTFKAETNPETGETLIAGMGELHLDIMVDRLKREFKVAAKVGEPQVAYRETFTKETSAQGKFVRQSGGKGQYGDVWIEFTPNEEGKGFEFENAIVGGVVPREYIPAVEQGLKEAMANGVLAGYPLIDVKAKLYDGSYHEVDSSEAAFKVAASMALKNASKSAGAVILEPIMHVEVVAPEEYLGDVMGQITARRGRVEGMEARGNAQLVNSMVPLAEMFGYATTLRSATQGRGTFTMTFDHYEAVPKSIQAEIIKKNGGGVATKD.

In terms of domain architecture, tr-type G spans Asp10 to Leu285. Residues Ala19–Thr26, Asp83–His87, and Asn137–Asp140 each bind GTP.

It belongs to the TRAFAC class translation factor GTPase superfamily. Classic translation factor GTPase family. EF-G/EF-2 subfamily.

The protein localises to the cytoplasm. Catalyzes the GTP-dependent ribosomal translocation step during translation elongation. During this step, the ribosome changes from the pre-translocational (PRE) to the post-translocational (POST) state as the newly formed A-site-bound peptidyl-tRNA and P-site-bound deacylated tRNA move to the P and E sites, respectively. Catalyzes the coordinated movement of the two tRNA molecules, the mRNA and conformational changes in the ribosome. This Lacticaseibacillus casei (strain BL23) (Lactobacillus casei) protein is Elongation factor G.